The sequence spans 370 residues: 3-isopropylmalate dehydrogenase 1 (370 aa).

Residues arginine 98, arginine 108, arginine 136, and aspartate 227 each contribute to the substrate site. Mg(2+)-binding residues include aspartate 227, aspartate 251, and aspartate 255. Residue 289-301 (GSAPDIAGQGIAN) participates in NAD(+) binding.

This sequence belongs to the isocitrate and isopropylmalate dehydrogenases family. LeuB type 1 subfamily. As to quaternary structure, homodimer. It depends on Mg(2+) as a cofactor. Requires Mn(2+) as cofactor.

It is found in the cytoplasm. The catalysed reaction is (2R,3S)-3-isopropylmalate + NAD(+) = 4-methyl-2-oxopentanoate + CO2 + NADH. The protein operates within amino-acid biosynthesis; L-leucine biosynthesis; L-leucine from 3-methyl-2-oxobutanoate: step 3/4. Functionally, catalyzes the oxidation of 3-carboxy-2-hydroxy-4-methylpentanoate (3-isopropylmalate) to 3-carboxy-4-methyl-2-oxopentanoate. The product decarboxylates to 4-methyl-2 oxopentanoate. The polypeptide is 3-isopropylmalate dehydrogenase 1 (Bordetella bronchiseptica (strain ATCC BAA-588 / NCTC 13252 / RB50) (Alcaligenes bronchisepticus)).